A 284-amino-acid polypeptide reads, in one-letter code: Ribose-phosphate pyrophosphokinase (284 aa).

ATP is bound by residues 34 to 36 (DNE) and 92 to 93 (RQ). Mg(2+) contacts are provided by histidine 125 and aspartate 163. The active site involves lysine 186. Residues arginine 188, aspartate 212, and 216 to 220 (STGGT) contribute to the D-ribose 5-phosphate site.

This sequence belongs to the ribose-phosphate pyrophosphokinase family. Class III (archaeal) subfamily. As to quaternary structure, homotetramer. The cofactor is Mg(2+).

The protein resides in the cytoplasm. It carries out the reaction D-ribose 5-phosphate + ATP = 5-phospho-alpha-D-ribose 1-diphosphate + AMP + H(+). Its pathway is metabolic intermediate biosynthesis; 5-phospho-alpha-D-ribose 1-diphosphate biosynthesis; 5-phospho-alpha-D-ribose 1-diphosphate from D-ribose 5-phosphate (route I): step 1/1. With respect to regulation, activated by inorganic phosphate, with a maximal activity at 190 mM. Above this concentration inorganic phosphate progressively inhibits the kinase. Completely inhibited by ADP, and partially inhibited by alpha,beta-methylene ATP (mATP). Lack of allosteric regulation. Involved in the biosynthesis of the central metabolite phospho-alpha-D-ribosyl-1-pyrophosphate (PRPP) via the transfer of pyrophosphoryl group from ATP to 1-hydroxyl of ribose-5-phosphate (Rib-5-P). It can also use dATP as diphosphoryl donor. The protein is Ribose-phosphate pyrophosphokinase of Methanocaldococcus jannaschii (strain ATCC 43067 / DSM 2661 / JAL-1 / JCM 10045 / NBRC 100440) (Methanococcus jannaschii).